The following is a 103-amino-acid chain: Small ribosomal subunit protein uS10 (103 aa).

This sequence belongs to the universal ribosomal protein uS10 family. Part of the 30S ribosomal subunit.

In terms of biological role, involved in the binding of tRNA to the ribosomes. In Desulfatibacillum aliphaticivorans, this protein is Small ribosomal subunit protein uS10.